Consider the following 195-residue polypeptide: Peptidyl-tRNA hydrolase (195 aa).

Tyr18 is a binding site for tRNA. The active-site Proton acceptor is His23. The tRNA site is built by Tyr69, Asn71, and Asn117.

It belongs to the PTH family. As to quaternary structure, monomer.

It localises to the cytoplasm. It carries out the reaction an N-acyl-L-alpha-aminoacyl-tRNA + H2O = an N-acyl-L-amino acid + a tRNA + H(+). In terms of biological role, hydrolyzes ribosome-free peptidyl-tRNAs (with 1 or more amino acids incorporated), which drop off the ribosome during protein synthesis, or as a result of ribosome stalling. Catalyzes the release of premature peptidyl moieties from peptidyl-tRNA molecules trapped in stalled 50S ribosomal subunits, and thus maintains levels of free tRNAs and 50S ribosomes. This is Peptidyl-tRNA hydrolase from Nitrosomonas eutropha (strain DSM 101675 / C91 / Nm57).